Here is a 539-residue protein sequence, read N- to C-terminus: Oviduct-specific glycoprotein (539 aa).

Residues 1-21 form the signal peptide; it reads MGKLLLWVGLLLMLKHHDGAA. The 364-residue stretch at 22 to 385 folds into the GH18 domain; that stretch reads HKLVCYFTNW…HTLNNLLVND (364 aa). A disulfide bridge connects residues cysteine 26 and cysteine 51. Chitin contacts are provided by residues 71–72, 98–101, tyrosine 142, 211–214, and tryptophan 355; these read PL, GGWN, and LSYD. The N-linked (GlcNAc...) asparagine glycan is linked to asparagine 402. Disordered regions lie at residues 433–480 and 503–539; these read TETH…KPLT and QKVT…LERL. The segment covering 440–457 has biased composition (low complexity); the sequence is ATMTTTPRGETATPTRTP.

The protein belongs to the glycosyl hydrolase 18 family. As to expression, oviduct.

The protein resides in the cytoplasmic vesicle. The protein localises to the secretory vesicle. Functionally, binds to oocyte zona pellucida in vivo. May play a role in the fertilization process and/or early embryonic development. The sequence is that of Oviduct-specific glycoprotein (OVGP1) from Ovis aries (Sheep).